Reading from the N-terminus, the 135-residue chain is Phosphoinositide-interacting protein (135 aa).

A disordered region spans residues 1-21; the sequence is MEVLPKALEVDERSPESKDLL. Positions 8–19 are enriched in basic and acidic residues; sequence LEVDERSPESKD. The next 2 membrane-spanning stretches (helical) occupy residues 54–74 and 92–112; these read IIIM…TCVA and PAFL…VPII.

As to quaternary structure, interacts with TRPV1. As to expression, strongly expressed in most dorsal root ganglia (DRG) and trigeminal neurons. Expressed by most peptidergic (CGRP+) and non-peptidergic (IB4+) DRG neurons. Weakly expressed in other parts of the peripheral nervous system (PNS) including sympathetic and enteric neurons. Not expressed in the spinal cord.

It is found in the membrane. In terms of biological role, regulatory subunit of TRPV1, a molecular sensor of noxious heat and capsaicin. Positively regulates TRPV1 channel activity via phosphatidylinositol 4,5-bisphosphate (PIP2). Binds various phosphoinositide, including phosphatidylinositol 4,5-bisphosphate (PIP2), but not phosphatidylinositol (PI). This Mus musculus (Mouse) protein is Phosphoinositide-interacting protein (Pirt).